Consider the following 203-residue polypeptide: MPSSLHAPLSGEVSAFSLSCPYFRCQDSTGEDLGRFPSPLPFLMCLLLFFPFRARWPRLMSSEKPGESPKPQKMAQPGGSQKKETSRSVPVTDPTSHNSEINQRDQQFSDMHLADLQKVFEKEADENGALKKEGFIRIMKGVLSSMSEEMLELLFLKVDSDCNGFVTWQKYVDYMMREFQGKEEMRKSQYRLRFHLPMTVIPL.

The segment at 61-107 (SSEKPGESPKPQKMAQPGGSQKKETSRSVPVTDPTSHNSEINQRDQQ) is disordered. The segment covering 87–107 (RSVPVTDPTSHNSEINQRDQQ) has biased composition (polar residues). 2 consecutive EF-hand domains span residues 111 to 145 (MHLA…VLSS) and 146 to 181 (MSEE…EFQG).

The sequence is that of EF-hand calcium-binding domain-containing protein 8 (Efcab8) from Mus musculus (Mouse).